We begin with the raw amino-acid sequence, 281 residues long: Probable replication-associated protein repA1 (281 aa).

It belongs to the IncFII RepA family.

This protein is essential for plasmid replication; it is involved in copy control functions. This chain is Probable replication-associated protein repA1 (repA1), found in Buchnera aphidicola subsp. Cinara cedri (strain Cc).